An 800-amino-acid chain; its full sequence is Putative antiporter subunit mnhA2 (800 aa).

The next 21 helical transmembrane spans lie at 3–23 (LVYLLGGLIVIMLIVLMTLFI), 29–49 (FAGYIALLAPILASGYFLAQI), 78–98 (GLGLMFGLIISIIGVAVFFYA), 109–129 (LPRFFLYLLLFMFSMLGIVVS), 133–153 (ILMYVFWELTSVSSFLLISYW), 167–187 (FIITVLGGLALLTGFIMLYII), 202–222 (SISEHALFIPMMIMLLIGAFT), 249–269 (SATMVKAGIFLLFKFTPILGL), 273–293 (YIYIVTFVGLITMIFGSVTAL), 300–320 (GILAYSTISQLGMIMSMVGLG), 337–357 (LILFAGLFHLMNHAIFKCALF), 387–407 (LVMTLAALSMAGVPLLNGFLS), 428–448 (LTIIVVAIGVIASIFTFVYAV), 472–492 (PWLFSLPAIILMVMIPIIFFI), 527–547 (GVNLPLIFSVIVIIVGLILAL), 596–616 (IITVLIFSILIAYGIFQVGLP), 627–647 (GPLEVILGIMISVVGIALVFI), 651–671 (LTMVILNGIIGYSVALFFLLM), 676–696 (LALTQLVVETITTILFIVSFS), 712–732 (TIKIIVSFIMAGAVVTLIFIA), and 768–788 (LDTMFEGIVLIIAGLGIYTLL).

The protein belongs to the CPA3 antiporters (TC 2.A.63) subunit A family. As to quaternary structure, may form a heterooligomeric complex that consists of seven subunits: mnhA2, mnhB2, mnhC2, mnhD2, mnhE2, mnhF2 and mnhG2.

It localises to the cell membrane. This is Putative antiporter subunit mnhA2 (mnhA2) from Staphylococcus haemolyticus (strain JCSC1435).